The chain runs to 258 residues: UPF0246 protein HI_0984 (258 aa).

This sequence belongs to the UPF0246 family.

This chain is UPF0246 protein HI_0984, found in Haemophilus influenzae (strain ATCC 51907 / DSM 11121 / KW20 / Rd).